We begin with the raw amino-acid sequence, 256 residues long: Probable enoyl-CoA hydratase echA14 (256 aa).

The tract at residues 235–256 (GPQAKSVQSPEFAARLAAAQHR) is disordered.

It belongs to the enoyl-CoA hydratase/isomerase family.

It catalyses the reaction a (3S)-3-hydroxyacyl-CoA = a (2E)-enoyl-CoA + H2O. The catalysed reaction is a 4-saturated-(3S)-3-hydroxyacyl-CoA = a (3E)-enoyl-CoA + H2O. In terms of biological role, could possibly oxidize fatty acids using specific components. The chain is Probable enoyl-CoA hydratase echA14 (echA14) from Mycobacterium tuberculosis (strain CDC 1551 / Oshkosh).